A 499-amino-acid chain; its full sequence is Protein adenylyltransferase Fic (499 aa).

The helical transmembrane segment at 38 to 58 (FHYFVIFASGSLFSGLMFGLL) threads the bilayer. 2 TPR repeats span residues 126 to 159 (ALSSLKVAIEMKTMGKDDKAARLFQHALALSPKH) and 160 to 194 (PEILTKYGEFLEHNQQDVVRADHYYYQALTVNPSH). Positions 251–256 (SVGIEG) match the Inhibitory (S/T)XXXE(G/N) motif motif. Residues Glu255 and 337–340 (VGGH) contribute to the ATP site. The Fido domain maps to 306 to 441 (ITLKDILEIH…IRPFVRFIAD (136 aa)). His384 is an active-site residue. ATP-binding positions include 388–395 (DGNGRTSR), 420–421 (YY), and Asn428.

The protein belongs to the fic family. In terms of assembly, homodimer.

The protein resides in the membrane. It carries out the reaction L-tyrosyl-[protein] + ATP = O-(5'-adenylyl)-L-tyrosyl-[protein] + diphosphate. The enzyme catalyses L-threonyl-[protein] + ATP = 3-O-(5'-adenylyl)-L-threonyl-[protein] + diphosphate. It catalyses the reaction 3-O-(5'-adenylyl)-L-threonyl-[protein] + H2O = L-threonyl-[protein] + AMP + H(+). The side chain of Glu-255 determines which of the two opposing activities (AMPylase or de-AMPylase) will take place. In response to endoplasmic reticulum stress, mediates de-AMPylase activity. Adenylyltransferase activity is inhibited by the inhibitory helix present at the N-terminus: Glu-255 binds ATP and competes with ATP-binding at Arg-395, thereby preventing adenylyltransferase activity. In unstressed cells, disengagement of Glu-255 promotes adenylyltransferase activity. Activation dissociates ATP-binding from Glu-255, allowing ordered binding of the entire ATP moiety with the alpha-phosphate in an orientation that is productive for accepting an incoming target hydroxyl side chain. Functionally, protein that can both mediate the addition of adenosine 5'-monophosphate (AMP) to specific residues of target proteins (AMPylation), and the removal of the same modification from target proteins (de-AMPylation), depending on the context. The side chain of Glu-255 determines which of the two opposing activities (AMPylase or de-AMPylase) will take place. Acts as a key regulator of the unfolded protein response (UPR) by mediating AMPylation or de-AMPylation of Hsc70-3/BiP. In unstressed cells, acts as an adenylyltransferase by mediating AMPylation of Hsc70-3/BiP at 'Thr-518', thereby inactivating it. In response to endoplasmic reticulum stress, acts as a phosphodiesterase by mediating removal of ATP (de-AMPylation) from Hsc70-3/BiP at 'Thr-518', leading to restore HSPA5/BiP activity. The polypeptide is Protein adenylyltransferase Fic (Aedes aegypti (Yellowfever mosquito)).